The following is a 938-amino-acid chain: Isoleucine--tRNA ligase (938 aa).

The short motif at 58-68 is the 'HIGH' region element; sequence PYANGSIHIGH. At Lys183 the chain carries N6-acetyllysine. Glu561 provides a ligand contact to L-isoleucyl-5'-AMP. The 'KMSKS' region motif lies at 602–606; the sequence is KMSKS. Lys605 contributes to the ATP binding site. The Zn(2+) site is built by Cys901, Cys904, Cys921, and Cys924.

It belongs to the class-I aminoacyl-tRNA synthetase family. IleS type 1 subfamily. Monomer. Zn(2+) is required as a cofactor.

It is found in the cytoplasm. It carries out the reaction tRNA(Ile) + L-isoleucine + ATP = L-isoleucyl-tRNA(Ile) + AMP + diphosphate. Functionally, catalyzes the attachment of isoleucine to tRNA(Ile). As IleRS can inadvertently accommodate and process structurally similar amino acids such as valine, to avoid such errors it has two additional distinct tRNA(Ile)-dependent editing activities. One activity is designated as 'pretransfer' editing and involves the hydrolysis of activated Val-AMP. The other activity is designated 'posttransfer' editing and involves deacylation of mischarged Val-tRNA(Ile). The sequence is that of Isoleucine--tRNA ligase from Escherichia coli O9:H4 (strain HS).